We begin with the raw amino-acid sequence, 451 residues long: Probable V-type proton ATPase subunit H 1 (451 aa).

The protein belongs to the V-ATPase H subunit family. V-ATPase is a heteromultimeric enzyme made up of two complexes: the ATP-hydrolytic V1 complex and the proton translocation V0 complex. The V1 complex consists of three catalytic AB heterodimers that form a heterohexamer, three peripheral stalks each consisting of EG heterodimers, one central rotor including subunits D and F, and the regulatory subunits C and H. The proton translocation complex V0 consists of the proton transport subunit a, a ring of proteolipid subunits c9c'', rotary subunit d, subunits e and f, and the accessory subunits vah-19/Ac45 and vah-20/PRR.

Functionally, subunit of the V1 complex of vacuolar(H+)-ATPase (V-ATPase), a multisubunit enzyme composed of a peripheral complex (V1) that hydrolyzes ATP and a membrane integral complex (V0) that translocates protons. V-ATPase is responsible for acidifying and maintaining the pH of intracellular compartments and in some cell types, is targeted to the plasma membrane, where it is responsible for acidifying the extracellular environment. Subunit H is essential for V-ATPase activity, but not for the assembly of the complex. The protein is Probable V-type proton ATPase subunit H 1 of Caenorhabditis elegans.